The sequence spans 691 residues: DNA ligase (691 aa).

NAD(+) is bound by residues 53 to 57, 102 to 103, and Glu-135; these read DSEYD and SL. Lys-137 functions as the N6-AMP-lysine intermediate in the catalytic mechanism. The NAD(+) site is built by Arg-158, Glu-195, Lys-310, and Lys-334. 4 residues coordinate Zn(2+): Cys-428, Cys-431, Cys-446, and Cys-452. In terms of domain architecture, BRCT spans 613–691; it reads SEGLPLDGQT…EEEFLVLVGE (79 aa).

This sequence belongs to the NAD-dependent DNA ligase family. LigA subfamily. It depends on Mg(2+) as a cofactor. Mn(2+) is required as a cofactor.

The enzyme catalyses NAD(+) + (deoxyribonucleotide)n-3'-hydroxyl + 5'-phospho-(deoxyribonucleotide)m = (deoxyribonucleotide)n+m + AMP + beta-nicotinamide D-nucleotide.. Functionally, DNA ligase that catalyzes the formation of phosphodiester linkages between 5'-phosphoryl and 3'-hydroxyl groups in double-stranded DNA using NAD as a coenzyme and as the energy source for the reaction. It is essential for DNA replication and repair of damaged DNA. This chain is DNA ligase, found in Psychrobacter cryohalolentis (strain ATCC BAA-1226 / DSM 17306 / VKM B-2378 / K5).